A 179-amino-acid polypeptide reads, in one-letter code: Bacterioferritin (179 aa).

A Ferritin-like diiron domain is found at 1-150 (MAGNREDRKA…NIGSHIKNLG (150 aa)). Residues Glu-23 and Glu-56 each coordinate Fe cation. Met-57 provides a ligand contact to Fe-coproporphyrin III. Residues His-59, Glu-99, Glu-132, and His-135 each coordinate Fe cation.

This sequence belongs to the bacterioferritin family. In terms of assembly, homooligomer of 24 subunits, arranged as 12 dimers, that are packed together to form an approximately spherical molecule with a central cavity, in which large amounts of iron can be deposited. Fe-coproporphyrin III is required as a cofactor. The cofactor is Fe cation.

The catalysed reaction is 4 Fe(2+) + O2 + 4 H(+) = 4 Fe(3+) + 2 H2O. It catalyses the reaction Fe(2+)(in) = Fe(2+)(out). In terms of biological role, iron-storage protein, whose ferroxidase center binds Fe(2+), oxidizes it using dioxygen to Fe(3+), and participates in the subsequent Fe(3+) oxide mineral core formation within the central cavity of the BFR protein shell. This is Bacterioferritin (bfr) from Desulfovibrio desulfuricans (strain ATCC 27774 / DSM 6949 / MB).